A 118-amino-acid polypeptide reads, in one-letter code: NADH-quinone oxidoreductase subunit A 1 (118 aa).

3 helical membrane passes run methionine 1–alanine 21, phenylalanine 60–tryptophan 80, and leucine 87–isoleucine 107.

Belongs to the complex I subunit 3 family. In terms of assembly, NDH-1 is composed of 14 different subunits. Subunits NuoA, H, J, K, L, M, N constitute the membrane sector of the complex.

It localises to the cell inner membrane. It carries out the reaction a quinone + NADH + 5 H(+)(in) = a quinol + NAD(+) + 4 H(+)(out). In terms of biological role, NDH-1 shuttles electrons from NADH, via FMN and iron-sulfur (Fe-S) centers, to quinones in the respiratory chain. The immediate electron acceptor for the enzyme in this species is believed to be ubiquinone. Couples the redox reaction to proton translocation (for every two electrons transferred, four hydrogen ions are translocated across the cytoplasmic membrane), and thus conserves the redox energy in a proton gradient. The polypeptide is NADH-quinone oxidoreductase subunit A 1 (Geobacter sulfurreducens (strain ATCC 51573 / DSM 12127 / PCA)).